Reading from the N-terminus, the 329-residue chain is CDP-6-deoxy-L-threo-D-glycero-4-hexulose-3-dehydrase reductase (329 aa).

The 2Fe-2S ferredoxin-type domain maps to 2 to 93 (SLNVKLHPSG…ELDVNYYPEL (92 aa)). Cys37, Cys42, Cys45, and Cys75 together coordinate [2Fe-2S] cluster. Residues 98-197 (KKTYPCKLDS…EGPQGTFFVR (100 aa)) form the FAD-binding FR-type domain.

As to quaternary structure, monomer.

It participates in nucleotide-sugar biosynthesis; CDP-ascarylose biosynthesis. The protein operates within bacterial outer membrane biogenesis; lipopolysaccharide biosynthesis. Functionally, participates in the conversion of CDP-6-deoxy-D-glycero-L-threo-4-hexulose to 3,6-dideoxy-D-glycero-D-glycero-4-hexulose together with CDP-6-deoxy-D-glycero-L-threo-4-hexulose-3-dehydrase (E1) in two consecutive steps. The detailed mechanism of E3 is not yet resolved. The polypeptide is CDP-6-deoxy-L-threo-D-glycero-4-hexulose-3-dehydrase reductase (ascD) (Yersinia pseudotuberculosis serotype I (strain IP32953)).